We begin with the raw amino-acid sequence, 552 residues long: Cytochrome c oxidase subunit 1 (552 aa).

Residues 35 to 55 (VIGIQYLVTAFIFYLIGGLMA) form a helical membrane-spanning segment. Position 82 (H82) interacts with Fe(II)-heme a. 6 consecutive transmembrane segments (helical) span residues 85–105 (IMIF…YLVP), 120–140 (ALAF…FLFG), 164–184 (WILA…NFIV), 211–231 (LLAL…LFDI), 252–272 (LFWF…FGIM), and 284–304 (IFGY…GLFV). Cu cation-binding residues include H258 and Y262. A cross-link (1'-histidyl-3'-tyrosine (His-Tyr)) is located at residues 258–262 (HPAVY). Positions 307 and 308 each coordinate Cu cation. 5 consecutive transmembrane segments (helical) span residues 321 to 341 (FFTI…FSWV), 355 to 375 (MLFA…GVTL), 390 to 410 (VVAH…YAGI), 426 to 446 (LGIL…LPMH), and 470 to 490 (ICTI…INII). H393 contacts heme a3. H395 is a binding site for Fe(II)-heme a.

The protein belongs to the heme-copper respiratory oxidase family. Requires Cu(2+) as cofactor. The cofactor is heme.

It localises to the cell membrane. The enzyme catalyses 4 Fe(II)-[cytochrome c] + O2 + 8 H(+)(in) = 4 Fe(III)-[cytochrome c] + 2 H2O + 4 H(+)(out). It participates in energy metabolism; oxidative phosphorylation. Its function is as follows. Cytochrome c oxidase is the component of the respiratory chain that catalyzes the reduction of oxygen to water. Subunits 1-3 form the functional core of the enzyme complex. CO I is the catalytic subunit of the enzyme. Electrons originating in cytochrome c are transferred via the copper A center of subunit 2 and heme A of subunit 1 to the bimetallic center formed by heme A3 and copper B. The chain is Cytochrome c oxidase subunit 1 (ctaD) from Thermostichus vulcanus (Synechococcus vulcanus).